Consider the following 340-residue polypeptide: Protein-arginine kinase (340 aa).

A Phosphagen kinase C-terminal domain is found at 14 to 244 (IVITTRIRLA…EQIINQENLS (231 aa)). ATP-binding positions include 17 to 21 (TTRIR), His81, Arg115, 166 to 170 (RASVM), and 197 to 202 (RGLWGE).

Belongs to the ATP:guanido phosphotransferase family.

It carries out the reaction L-arginyl-[protein] + ATP = N(omega)-phospho-L-arginyl-[protein] + ADP + H(+). In terms of biological role, catalyzes the specific phosphorylation of arginine residues in proteins. This Clostridium acetobutylicum (strain ATCC 824 / DSM 792 / JCM 1419 / IAM 19013 / LMG 5710 / NBRC 13948 / NRRL B-527 / VKM B-1787 / 2291 / W) protein is Protein-arginine kinase.